The chain runs to 580 residues: CTP synthase (580 aa).

The Glutamine amidotransferase type-1 domain occupies 304-559; it reads NIILVGKYVS…VAASSGCLDE (256 aa). Residues C403, H532, and E534 each act as for GATase activity in the active site.

Belongs to the CTP synthase family.

It catalyses the reaction UTP + L-glutamine + ATP + H2O = CTP + L-glutamate + ADP + phosphate + 2 H(+). It participates in pyrimidine metabolism; CTP biosynthesis via de novo pathway; CTP from UDP: step 2/2. Catalyzes the ATP-dependent amination of UTP to CTP with either L-glutamine or ammonia as the source of nitrogen. In Gibberella zeae (strain ATCC MYA-4620 / CBS 123657 / FGSC 9075 / NRRL 31084 / PH-1) (Wheat head blight fungus), this protein is CTP synthase (URA7).